We begin with the raw amino-acid sequence, 242 residues long: Carboxy-S-adenosyl-L-methionine synthase (242 aa).

S-adenosyl-L-methionine-binding positions include Y39, 64 to 66 (GCS), 89 to 90 (DN), 117 to 118 (DI), N132, and R199.

This sequence belongs to the class I-like SAM-binding methyltransferase superfamily. Cx-SAM synthase family. As to quaternary structure, homodimer.

It carries out the reaction prephenate + S-adenosyl-L-methionine = carboxy-S-adenosyl-L-methionine + 3-phenylpyruvate + H2O. Catalyzes the conversion of S-adenosyl-L-methionine (SAM) to carboxy-S-adenosyl-L-methionine (Cx-SAM). The protein is Carboxy-S-adenosyl-L-methionine synthase of Aliivibrio fischeri (strain MJ11) (Vibrio fischeri).